The chain runs to 438 residues: Cell division cycle-associated 7-like protein (438 aa).

The short motif at 9–33 (IPKEVADIFNAPSDDEEFVGFQDDV) is the Integrase domain-binding motif 1 (IBM1) element. Residue serine 21 is modified to Phosphoserine. Positions 55-114 (ACLHSKYFTEELRRIFKEDTDSDNEDFEGFTESELNIGSNPELIESELSDGDKTHPMMSD) are PSIP1-binding. The Integrase domain-binding motif 2 (IBM2) motif lies at 62–88 (FTEELRRIFKEDTDSDNEDFEGFTESE). Positions 72-199 (EDTDSDNEDF…ESRAESQETS (128 aa)) are disordered. Threonine 74 carries the post-translational modification Phosphothreonine. Residues 74–85 (TDSDNEDFEGFT) show a composition bias toward acidic residues. Position 76 is a phosphoserine (serine 76). At threonine 85 the chain carries Phosphothreonine. Serine 100, serine 103, serine 113, serine 135, serine 136, serine 183, and serine 185 each carry phosphoserine. Acidic residues predominate over residues 113–123 (SDEEDDDDEEE). The span at 166–183 (TDLRREKSCRQPKEKEDS) shows a compositional bias: basic and acidic residues. Positions 201-223 (ALLKRAMNIKENKAMLAQLLAEL) are MYC-binding. Glycyl lysine isopeptide (Lys-Gly) (interchain with G-Cter in SUMO2) cross-links involve residues lysine 210 and lysine 213. Position 249 is a phosphoserine (serine 249).

Interacts with MYC. Interacts (via IBM motifs) with PSIP1 (via IBD domain); phosphorylation increases its affinity for PSIP1. Post-translationally, phosphorylation increases its interaction with PSIP1.

The protein localises to the cytoplasm. Its subcellular location is the nucleus. Functionally, plays a role in transcriptional regulation as a repressor that inhibits monoamine oxidase A (MAOA) activity and gene expression by binding to the promoter. Plays an important oncogenic role in mediating the full transforming effect of MYC in medulloblastoma cells. Involved in apoptotic signaling pathways; May act downstream of P38-kinase and BCL-2, but upstream of CASP3/caspase-3 as well as CCND1/cyclin D1 and E2F1. This Rattus norvegicus (Rat) protein is Cell division cycle-associated 7-like protein (Cdca7l).